The chain runs to 587 residues: Arginine--tRNA ligase (587 aa).

The short motif at 123 to 133 is the 'HIGH' region element; the sequence is ANVAKPLHVGH.

The protein belongs to the class-I aminoacyl-tRNA synthetase family. In terms of assembly, monomer.

The protein localises to the cytoplasm. The enzyme catalyses tRNA(Arg) + L-arginine + ATP = L-arginyl-tRNA(Arg) + AMP + diphosphate. In Alkaliphilus oremlandii (strain OhILAs) (Clostridium oremlandii (strain OhILAs)), this protein is Arginine--tRNA ligase.